Reading from the N-terminus, the 4363-residue chain is AM-toxin synthetase AMT1 (4363 aa).

Residues 278–670 form an adenylation 1 region; the sequence is AGQAKQRPHA…GSLLYVGRKD (393 aa). Residues 810-887 form the Carrier 1 domain; that stretch reads APDSVIARQL…ALAAIAKVIP (78 aa). An O-(pantetheine 4'-phosphoryl)serine modification is found at Ser-847. The interval 926 to 1340 is condensation 1; it reads EDVYACTPLQ…TLGQIDVLTS (415 aa). Positions 1368-1765 are adenylation 2; the sequence is KQARTRPGAI…LGRKDTQIKI (398 aa). Residues 1884 to 1961 form the Carrier 2 domain; sequence PPVTDMEKHV…DQARHVTLLT (78 aa). The residue at position 1922 (Ser-1922) is an O-(pantetheine 4'-phosphoryl)serine. Positions 1999–2410 are condensation 2; sequence EDVYPCTPLQ…ASPSSSTLVS (412 aa). The adenylation 3 stretch occupies residues 2448–2853; it reads RKKALAAPQA…GRKDNQVKIR (406 aa). A Carrier 3 domain is found at 2977 to 3053; sequence LPSTVMEETL…DLAACCTDRR (77 aa). Residue Ser-3014 is modified to O-(pantetheine 4'-phosphoryl)serine. The interval 3098–3503 is condensation 3; it reads VEDVYPCTPM…ELVSSIETLN (406 aa). The 77-residue stretch at 3730–3806 folds into the Carrier 4 domain; that stretch reads PAVTAMQLAI…SLAVRATENT (77 aa). Ser-3767 bears the O-(pantetheine 4'-phosphoryl)serine mark. Positions 3850-4204 are condensation 4; it reads QDVLPCTSMQ…GLDEIVEHYA (355 aa).

This sequence belongs to the NRP synthetase family.

The protein operates within mycotoxin biosynthesis. Functionally, nonribosomal peptide synthetase; part of the gene clusters that mediate the biosynthesis of AM-toxins, host-selective toxins (HSTs) causing Alternaria blotch on apple, a worldwide distributed disease. AM-toxins are cyclic depsipeptides containing the 3 residues 2-hydroxy-isovaleric acid (2-HIV), dehydroalanine, L-alanine which are common for all 3 AM-toxins I to III. The fourth precursor is L-alpha-amino-methoxyphenyl-valeric acid (L-Amv) for AM-toxin I, L-alpha-amino-phenyl-valeric acid (L-Apv) for AM-toxin II, and L-alpha-amino-hydroxyphenyl-valeric acid (L-Ahv) for AM-toxin III. AM-toxins have two target sites for affecting susceptible apple cells; they cause invagination of the plasma membrane and electrolyte loss, and chloroplast disorganization. The non-ribosomal peptide synthetase AMT1 contains 4 catalytic modules and is responsible for activation of each residue in AM-toxin. The aldo-keto reductase AMT2 catalyzes the conversion of 2-keto-isovaleric acid (2-KIV) to 2-hydroxy-isovaleric acid (2-HIV), one of the precursor residues incorporated by AMT1 during AM-toxin biosynthesis, by reduction of its ketone to an alcohol. The cytochrome P450 monooxygenase AMT3 and the thioesterase AMT4 are also important for AM-toxin production, but their exact function within the AM-toxin biosynthesis are not known yet. Up to 21 proteins (including AMT1 to AMT4) are predicted to be involved in AM-toxin biosynthesis since their expression ishighly up-regulated in AM-toxin-producing cultures. This Alternaria alternata (Alternaria rot fungus) protein is AM-toxin synthetase AMT1.